We begin with the raw amino-acid sequence, 356 residues long: tRNA-specific 2-thiouridylase MnmA 1 (356 aa).

ATP contacts are provided by residues 8-15 and methionine 34; that span reads GMSGGVDS. Residue cysteine 103 is the Nucleophile of the active site. An intrachain disulfide couples cysteine 103 to cysteine 199. ATP is bound at residue glycine 127. The segment at 149–151 is interaction with tRNA; it reads KDQ. The Cysteine persulfide intermediate role is filled by cysteine 199. Residues 305–306 are interaction with tRNA; the sequence is RY.

The protein belongs to the MnmA/TRMU family.

The protein localises to the cytoplasm. It carries out the reaction S-sulfanyl-L-cysteinyl-[protein] + uridine(34) in tRNA + AH2 + ATP = 2-thiouridine(34) in tRNA + L-cysteinyl-[protein] + A + AMP + diphosphate + H(+). In terms of biological role, catalyzes the 2-thiolation of uridine at the wobble position (U34) of tRNA, leading to the formation of s(2)U34. The protein is tRNA-specific 2-thiouridylase MnmA 1 of Clostridium botulinum (strain Loch Maree / Type A3).